Reading from the N-terminus, the 430-residue chain is Leucoanthocyanidin dioxygenase (430 aa).

The Fe2OG dioxygenase domain maps to 212–311 (LLLQMKINYY…RFSWAIFCEP (100 aa)). Fe cation contacts are provided by His236, Asp238, and His292. Basic and acidic residues-rich tracts occupy residues 376–407 (KKDNQDAVAENKDIKEDEQCGPAEHKDIKEDG) and 415–430 (KVFKENNQDVAAEESK). Residues 376 to 430 (KKDNQDAVAENKDIKEDEQCGPAEHKDIKEDGQGAAAENKVFKENNQDVAAEESK) form a disordered region.

It belongs to the iron/ascorbate-dependent oxidoreductase family. Fe cation is required as a cofactor. It depends on L-ascorbate as a cofactor. Predominantly expressed in corollas and at lower levels in anthers.

The catalysed reaction is a (2R,3S,4S)-leucoanthocyanidin + 2-oxoglutarate + O2 = a 4-H-anthocyanidin with a 3-hydroxy group + succinate + CO2 + 2 H2O. It participates in pigment biosynthesis; anthocyanin biosynthesis. Its function is as follows. Oxidation of leucoanthocyanidins into anthocyanidins. The protein is Leucoanthocyanidin dioxygenase (ANT17) of Petunia hybrida (Petunia).